A 298-amino-acid polypeptide reads, in one-letter code: Inosose dehydratase (298 aa).

The protein belongs to the IolE/MocC family. Requires glutathione as cofactor. The cofactor is Co(2+). Mn(2+) is required as a cofactor.

It catalyses the reaction scyllo-inosose = 3D-3,5/4-trihydroxycyclohexane-1,2-dione + H2O. It functions in the pathway polyol metabolism; myo-inositol degradation into acetyl-CoA; acetyl-CoA from myo-inositol: step 2/7. Functionally, catalyzes the dehydration of inosose (2-keto-myo-inositol, 2KMI or 2,4,6/3,5-pentahydroxycyclohexanone) to 3D-(3,5/4)-trihydroxycyclohexane-1,2-dione (D-2,3-diketo-4-deoxy-epi-inositol). This is Inosose dehydratase from Lacticaseibacillus casei (Lactobacillus casei).